Reading from the N-terminus, the 101-residue chain is Putative membrane protein insertion efficiency factor (101 aa).

It belongs to the UPF0161 family.

The protein localises to the cell membrane. Could be involved in insertion of integral membrane proteins into the membrane. The chain is Putative membrane protein insertion efficiency factor from Lacticaseibacillus casei (strain BL23) (Lactobacillus casei).